The primary structure comprises 669 residues: Putative transcription factor SOX-14 (669 aa).

The segment covering 1-12 has biased composition (polar residues); the sequence is MIAKPNQATTEP. Disordered regions lie at residues 1–149, 254–336, and 419–439; these read MIAK…EMTL, YKYR…PKYE, and SSLT…MDNI. Positions 17 to 37 are enriched in low complexity; it reads RPGTVPTVPATTPARPATITI. Positions 52-71 are enriched in pro residues; it reads TLPPFSPSPSPASSPSPAPA. Residues 75-84 are compositionally biased toward polar residues; it reads GAQKTQSQAA. A compositionally biased stretch (low complexity) spans 88–105; the sequence is PAAVASPSAPVAAAAPKT. The span at 130 to 145 shows a compositional bias: basic and acidic residues; it reads RESEMDGERSPSHSGH. The segment at residues 187–255 is a DNA-binding region (HMG box); the sequence is IKRPMNAFMV…LHMIEYPNYK (69 aa). Residues 284-294 show a composition bias toward low complexity; that stretch reads TTNNNNSLTTL. Residues 295 to 318 are compositionally biased toward polar residues; sequence AINGTTTAGRKSKRSTSTCQSGSA. Positions 322–336 are enriched in basic and acidic residues; the sequence is LRNDSGDTSSKPKYE. The segment covering 419–431 has biased composition (polar residues); sequence SSLTQSQHNQSDP.

The protein localises to the nucleus. The sequence is that of Putative transcription factor SOX-14 (Sox14) from Drosophila melanogaster (Fruit fly).